The primary structure comprises 78 residues: Acyl carrier protein (78 aa).

One can recognise a Carrier domain in the interval 2-77 (SDIAERVKKI…DAIKYIGENM (76 aa)). O-(pantetheine 4'-phosphoryl)serine is present on Ser37.

This sequence belongs to the acyl carrier protein (ACP) family. 4'-phosphopantetheine is transferred from CoA to a specific serine of apo-ACP by AcpS. This modification is essential for activity because fatty acids are bound in thioester linkage to the sulfhydryl of the prosthetic group.

It is found in the cytoplasm. The protein operates within lipid metabolism; fatty acid biosynthesis. Carrier of the growing fatty acid chain in fatty acid biosynthesis. This is Acyl carrier protein from Magnetococcus marinus (strain ATCC BAA-1437 / JCM 17883 / MC-1).